Reading from the N-terminus, the 316-residue chain is MAAKPPLTLYLAAPRGFCAGVDRAIKIVEMALEKWGAPVYVRHEIVHNKFVVDGLRDKGAVFVEELEECPDDRPVIFSAHGVPKSVPAAAEARQMVYVDATCPLVSKVHIEAQRHAEAGLQMIMIGHKGHPETVGTMGQLPEGEVLLVETVEDVAQVEVRDPERLAFVTQTTLSVDDTKDIVAALQARFPAIVGPHKEDICYATTNRQEAVKEVAPKADALLVVGAPNSSNSRRLVEVGAKNGCSYAQLVQRAENIDWRALEGIQSIAITAGASAPELLVNEVIDAFRDRYEVTVELVETAVERVEFKVPRVLRTA.

C18 contacts [4Fe-4S] cluster. The (2E)-4-hydroxy-3-methylbut-2-enyl diphosphate site is built by H47 and H80. Dimethylallyl diphosphate-binding residues include H47 and H80. Isopentenyl diphosphate is bound by residues H47 and H80. C102 serves as a coordination point for [4Fe-4S] cluster. (2E)-4-hydroxy-3-methylbut-2-enyl diphosphate is bound at residue H130. Position 130 (H130) interacts with dimethylallyl diphosphate. Residue H130 coordinates isopentenyl diphosphate. E132 serves as the catalytic Proton donor. T171 contacts (2E)-4-hydroxy-3-methylbut-2-enyl diphosphate. A [4Fe-4S] cluster-binding site is contributed by C201. (2E)-4-hydroxy-3-methylbut-2-enyl diphosphate is bound by residues S229, S230, N231, and S274. Residues S229, S230, N231, and S274 each coordinate dimethylallyl diphosphate. Isopentenyl diphosphate contacts are provided by S229, S230, N231, and S274.

This sequence belongs to the IspH family. It depends on [4Fe-4S] cluster as a cofactor.

The enzyme catalyses isopentenyl diphosphate + 2 oxidized [2Fe-2S]-[ferredoxin] + H2O = (2E)-4-hydroxy-3-methylbut-2-enyl diphosphate + 2 reduced [2Fe-2S]-[ferredoxin] + 2 H(+). It catalyses the reaction dimethylallyl diphosphate + 2 oxidized [2Fe-2S]-[ferredoxin] + H2O = (2E)-4-hydroxy-3-methylbut-2-enyl diphosphate + 2 reduced [2Fe-2S]-[ferredoxin] + 2 H(+). The protein operates within isoprenoid biosynthesis; dimethylallyl diphosphate biosynthesis; dimethylallyl diphosphate from (2E)-4-hydroxy-3-methylbutenyl diphosphate: step 1/1. It participates in isoprenoid biosynthesis; isopentenyl diphosphate biosynthesis via DXP pathway; isopentenyl diphosphate from 1-deoxy-D-xylulose 5-phosphate: step 6/6. Catalyzes the conversion of 1-hydroxy-2-methyl-2-(E)-butenyl 4-diphosphate (HMBPP) into a mixture of isopentenyl diphosphate (IPP) and dimethylallyl diphosphate (DMAPP). Acts in the terminal step of the DOXP/MEP pathway for isoprenoid precursor biosynthesis. This chain is 4-hydroxy-3-methylbut-2-enyl diphosphate reductase, found in Ruegeria sp. (strain TM1040) (Silicibacter sp.).